We begin with the raw amino-acid sequence, 710 residues long: Solute carrier organic anion transporter family member 3A1 (710 aa).

An N-acetylmethionine modification is found at Met-1. The interval 1 to 25 (MQAKKPGGSSGGGRSGELQGDEAQR) is disordered. The Cytoplasmic segment spans residues 1–40 (MQAKKPGGSSGGGRSGELQGDEAQRNKKKKKKVSCFSNIK). The helical transmembrane segment at 41-60 (IFLVSECALMLAQGTVGAYL) threads the bilayer. Residues 61–79 (VSVLTTLERRFNLQSADVG) lie on the Extracellular side of the membrane. A helical transmembrane segment spans residues 80 to 100 (VIASSFEIGNLALILFVSYFG). Over 101-106 (ARGHRP) the chain is Cytoplasmic. Residues 107–131 (RLIGCGGIVMALGALLSALPEFLTH) traverse the membrane as a helical segment. The Extracellular portion of the chain corresponds to 132–174 (QYKYEAGEIRWGAEGRDVCAANGSGGDQGPDPDLICRSRTATN). A glycan (N-linked (GlcNAc...) asparagine) is linked at Asn-153. The chain crosses the membrane as a helical span at residues 175-203 (MMYLLLIGAQVLLGIGATPVQPLGVSYID). The Cytoplasmic portion of the chain corresponds to 204 to 222 (DHVRRKDSSLYIGILFTML). The helical transmembrane segment at 223 to 243 (VFGPACGFILGSFCTKIYVDA) threads the bilayer. Residues 244-261 (VFIDTSNLDITPDDPRWI) are Extracellular-facing. A helical transmembrane segment spans residues 262–286 (GAWWGGFLLCGALLFFSSVLMFGFP). The Cytoplasmic segment spans residues 287–344 (QSLPPHSDPALESEQAMLPEREYERPKPSNGVLRHPLEPDSSASCFQQLRVIPKVTKH). The helical transmembrane segment at 345-366 (LLSNPVFTCIILAACMEIAVVA) threads the bilayer. Topologically, residues 367–386 (GFAAFLGKYLEQQFNLTTSS) are extracellular. The N-linked (GlcNAc...) asparagine glycan is linked to Asn-381. A helical transmembrane segment spans residues 387–410 (ANQLLGMTAIPCACLGIFLGGLLV). The Cytoplasmic portion of the chain corresponds to 411–414 (KKLS). The helical transmembrane segment at 415–438 (LSALGAIRMAMLVNLVSTACYVSF) threads the bilayer. Topologically, residues 439-539 (LFLGCDTGPV…PGCQEAFLTF (101 aa)) are extracellular. A glycan (N-linked (GlcNAc...) asparagine) is linked at Asn-457. The Kazal-like domain maps to 465 to 513 (LDPYSSCNKNCECQTDSFTPVCGADGITYLSACFAGCNSTNLTGCACLM). Intrachain disulfides connect Cys-471–Cys-501, Cys-477–Cys-497, and Cys-486–Cys-511. N-linked (GlcNAc...) asparagine glycans are attached at residues Asn-502, Asn-505, and Asn-519. Residues 540–562 (LCVMCVCSMIGAMAQTPSVIILI) form a helical membrane-spanning segment. The Cytoplasmic segment spans residues 563–571 (RTVSPELKS). A helical transmembrane segment spans residues 572–597 (YALGVLFLLLRLLGFIPPPLIFGAGI). Topologically, residues 598–630 (DSTCLFWSTFCGEQGACALYDNVAYRYLYVSIA) are extracellular. Residues 631-648 (IALKSFAFLLYTTTWQCL) form a helical membrane-spanning segment. Residues 649–705 (RKNYKRYIKNHEGGLSTSEFFASTLTLDNLGRDPVPANQTHRTKFIYNLEDHEWCEN) lie on the Cytoplasmic side of the membrane.

Belongs to the organo anion transporter (TC 2.A.60) family.

The protein localises to the basolateral cell membrane. The protein resides in the apical cell membrane. Its subcellular location is the basal cell membrane. The enzyme catalyses L-thyroxine(out) = L-thyroxine(in). It catalyses the reaction prostaglandin E1(out) = prostaglandin E1(in). It carries out the reaction prostaglandin E2(out) = prostaglandin E2(in). The catalysed reaction is prostaglandin F2alpha(out) = prostaglandin F2alpha(in). The enzyme catalyses (5Z,8Z,11Z,14Z)-eicosatetraenoate(out) = (5Z,8Z,11Z,14Z)-eicosatetraenoate(in). It catalyses the reaction taurocholate(out) = taurocholate(in). It carries out the reaction glycocholate(out) = glycocholate(in). The catalysed reaction is estrone 3-sulfate(out) = estrone 3-sulfate(in). The enzyme catalyses argipressin(out) = argipressin(in). Putative organic anion antiporter with apparent broad substrate specificity. Recognizes various substrates including thyroid hormone L-thyroxine, prostanoids such as prostaglandin E1 and E2, bile acids such as taurocholate, glycolate and glycochenodeoxycholate and peptide hormones such as L-arginine vasopressin, likely operating in a tissue-specific manner. The transport mechanism, its electrogenicity and potential tissue-specific counterions remain to be elucidated. The chain is Solute carrier organic anion transporter family member 3A1 (SLCO3A1) from Bos taurus (Bovine).